A 481-amino-acid chain; its full sequence is MATSATSPHAPGFPAEGRCGYYVEKKKRFCRMVVAAGKRFCGEHAGAAEEEDARKRILCPLDPKHTVYEDQLAKHLKKCNSREKPKPDFYIQDINAGLRDETEIPEQLVPISSLSEEQLEKLIKKLRKASEGLNSTLKDHIMSHPALHDALNDPKNGDSATKHLKQQASILGNIENLKLLGPRRCFVEFGAGKGKLSHWVDIALKDAEKVHFILVEKVTTRFKVDGKHRKKNSVFERLQIDIQHLCLNKIPVLREEKLPVVGIGKHLCGMATDLALRCLVETYAASFEERNEEPLAKRIKNDKTEKEIYTLAKEGNEKNVPEKWNPVAGIVIALCCHHRCDWRHYVGKEYFRALGLGAVEFHYFQRMSSWATCGMRKTSLETSNSTTKRQDNQNDDSEEHDDGGYRITDDGADCLPGLLSVEEKKKIGHLCKLLIDQGRIQYLQQKGFSPALQYYTDPLVSLENVLLTALPNHSSSPETTA.

The residue at position 2 (Ala2) is an N-acetylalanine. The segment at 56–83 adopts a CHHC U11-48K-type zinc-finger fold; the sequence is RILCPLDPKHTVYEDQLAKHLKKCNSRE. Residues Cys59, His65, His75, and Cys79 each contribute to the Zn(2+) site. Residues 113-140 adopt a coiled-coil conformation; that stretch reads SLSEEQLEKLIKKLRKASEGLNSTLKDH. Residues 381–408 are disordered; it reads ETSNSTTKRQDNQNDDSEEHDDGGYRIT.

Belongs to the methyltransferase TRM13 family.

The catalysed reaction is cytidine(4) in tRNA(Pro) + S-adenosyl-L-methionine = 2'-O-methylcytidine(4) in tRNA(Pro) + S-adenosyl-L-homocysteine + H(+). The enzyme catalyses cytidine(4) in tRNA(Gly)(GCC) + S-adenosyl-L-methionine = 2'-O-methylcytidine(4) in tRNA(Gly)(GCC) + S-adenosyl-L-homocysteine + H(+). It catalyses the reaction adenosine(4) in tRNA(His) + S-adenosyl-L-methionine = 2'-O-methyladenosine(4) in tRNA(His) + S-adenosyl-L-homocysteine + H(+). Functionally, tRNA methylase which 2'-O-methylates cytidine(4) in tRNA(Pro) and tRNA(Gly)(GCC), and adenosine(4) in tRNA(His). This is tRNA:m(4)X modification enzyme TRM13 homolog (TRMT13) from Homo sapiens (Human).